Consider the following 152-residue polypeptide: MSEKYVVTWDMLQIHARKLAARLMPSEQWKGIIAVSRGGLVPGALLARELGIRHVDTVCISSYDHDNQRELTVLKRAEGDGEGFIVIDDLVDTGGTAVAIRDMYPKAHFVTIFAKPAGQPLVDDYVIDIPQDTWIEQPWDMGVAFVPPISGR.

Residues 37-38 (RG), arginine 69, and 88-96 (DDLVDTGGT) contribute to the 5-phospho-alpha-D-ribose 1-diphosphate site. Arginine 69 contributes to the GMP binding site. Aspartate 89 contributes to the Mg(2+) binding site. Guanine-binding residues include aspartate 92 and isoleucine 135. Aspartate 92 and isoleucine 135 together coordinate xanthine. GMP contacts are provided by residues 92–96 (DTGGT) and 134–135 (WI).

It belongs to the purine/pyrimidine phosphoribosyltransferase family. XGPT subfamily. In terms of assembly, homotetramer. Mg(2+) is required as a cofactor.

The protein localises to the cell inner membrane. The catalysed reaction is GMP + diphosphate = guanine + 5-phospho-alpha-D-ribose 1-diphosphate. The enzyme catalyses XMP + diphosphate = xanthine + 5-phospho-alpha-D-ribose 1-diphosphate. It catalyses the reaction IMP + diphosphate = hypoxanthine + 5-phospho-alpha-D-ribose 1-diphosphate. It participates in purine metabolism; GMP biosynthesis via salvage pathway; GMP from guanine: step 1/1. It functions in the pathway purine metabolism; XMP biosynthesis via salvage pathway; XMP from xanthine: step 1/1. Functionally, purine salvage pathway enzyme that catalyzes the transfer of the ribosyl-5-phosphate group from 5-phospho-alpha-D-ribose 1-diphosphate (PRPP) to the N9 position of the 6-oxopurines guanine and xanthine to form the corresponding ribonucleotides GMP (guanosine 5'-monophosphate) and XMP (xanthosine 5'-monophosphate), with the release of PPi. To a lesser extent, also acts on hypoxanthine. This Enterobacter sp. (strain 638) protein is Xanthine-guanine phosphoribosyltransferase.